A 377-amino-acid chain; its full sequence is Chaperone protein DnaJ (377 aa).

Residues 3 to 67 (DYYDLLGVGR…QTRARYDQFG (65 aa)) enclose the J domain. A CR-type zinc finger spans residues 133–215 (GQEQEIKIPH…CGGQGVRQVR (83 aa)). Residues C146, C149, C163, C166, C189, C192, C203, and C206 each coordinate Zn(2+). CXXCXGXG motif repeat units lie at residues 146 to 153 (CDTCGGSG), 163 to 170 (CGTCGGAG), 189 to 196 (CPNCGGTG), and 203 to 210 (CNACGGQG).

The protein belongs to the DnaJ family. Homodimer. Zn(2+) serves as cofactor.

The protein localises to the cytoplasm. In terms of biological role, participates actively in the response to hyperosmotic and heat shock by preventing the aggregation of stress-denatured proteins and by disaggregating proteins, also in an autonomous, DnaK-independent fashion. Unfolded proteins bind initially to DnaJ; upon interaction with the DnaJ-bound protein, DnaK hydrolyzes its bound ATP, resulting in the formation of a stable complex. GrpE releases ADP from DnaK; ATP binding to DnaK triggers the release of the substrate protein, thus completing the reaction cycle. Several rounds of ATP-dependent interactions between DnaJ, DnaK and GrpE are required for fully efficient folding. Also involved, together with DnaK and GrpE, in the DNA replication of plasmids through activation of initiation proteins. This Parasynechococcus marenigrum (strain WH8102) protein is Chaperone protein DnaJ.